The following is a 325-amino-acid chain: Elongation factor P--(R)-beta-lysine ligase (325 aa).

A substrate-binding site is contributed by 76–78 (SPE). ATP contacts are provided by residues 100–102 (RNE) and N109. Y118 contributes to the substrate binding site. 244 to 245 (EL) is a binding site for ATP. E251 is a substrate binding site. G300 serves as a coordination point for ATP.

It belongs to the class-II aminoacyl-tRNA synthetase family. EpmA subfamily. Homodimer.

The enzyme catalyses D-beta-lysine + L-lysyl-[protein] + ATP = N(6)-((3R)-3,6-diaminohexanoyl)-L-lysyl-[protein] + AMP + diphosphate + H(+). With EpmB is involved in the beta-lysylation step of the post-translational modification of translation elongation factor P (EF-P) on 'Lys-34'. Catalyzes the ATP-dependent activation of (R)-beta-lysine produced by EpmB, forming a lysyl-adenylate, from which the beta-lysyl moiety is then transferred to the epsilon-amino group of EF-P 'Lys-34'. The sequence is that of Elongation factor P--(R)-beta-lysine ligase from Escherichia coli O139:H28 (strain E24377A / ETEC).